Reading from the N-terminus, the 246-residue chain is Pyridoxine 5'-phosphate synthase (246 aa).

Residues asparagine 8 and arginine 19 each contribute to the 3-amino-2-oxopropyl phosphate site. Residue histidine 44 is the Proton acceptor of the active site. 1-deoxy-D-xylulose 5-phosphate-binding residues include arginine 46 and histidine 51. Glutamate 76 functions as the Proton acceptor in the catalytic mechanism. A 1-deoxy-D-xylulose 5-phosphate-binding site is contributed by threonine 106. Histidine 198 acts as the Proton donor in catalysis. Residues aspartate 199 and 221-222 each bind 3-amino-2-oxopropyl phosphate; that span reads GH.

This sequence belongs to the PNP synthase family. As to quaternary structure, homooctamer; tetramer of dimers.

Its subcellular location is the cytoplasm. It carries out the reaction 3-amino-2-oxopropyl phosphate + 1-deoxy-D-xylulose 5-phosphate = pyridoxine 5'-phosphate + phosphate + 2 H2O + H(+). The protein operates within cofactor biosynthesis; pyridoxine 5'-phosphate biosynthesis; pyridoxine 5'-phosphate from D-erythrose 4-phosphate: step 5/5. Catalyzes the complicated ring closure reaction between the two acyclic compounds 1-deoxy-D-xylulose-5-phosphate (DXP) and 3-amino-2-oxopropyl phosphate (1-amino-acetone-3-phosphate or AAP) to form pyridoxine 5'-phosphate (PNP) and inorganic phosphate. This is Pyridoxine 5'-phosphate synthase from Brucella suis (strain ATCC 23445 / NCTC 10510).